Here is a 465-residue protein sequence, read N- to C-terminus: Probable Xaa-Pro aminopeptidase pepP (465 aa).

Positions 263, 274, 397, and 437 each coordinate Mn(2+).

Belongs to the peptidase M24B family. Mn(2+) is required as a cofactor.

It catalyses the reaction Release of any N-terminal amino acid, including proline, that is linked to proline, even from a dipeptide or tripeptide.. Its function is as follows. Catalyzes the removal of a penultimate prolyl residue from the N-termini of peptides. This Penicillium rubens (strain ATCC 28089 / DSM 1075 / NRRL 1951 / Wisconsin 54-1255) (Penicillium chrysogenum) protein is Probable Xaa-Pro aminopeptidase pepP (pepP).